We begin with the raw amino-acid sequence, 378 residues long: RIB43A-like with coiled-coils protein 1 (378 aa).

Coiled-coil stretches lie at residues 153–250 and 279–334; these read RMQQ…VTSD and EQRA…CAEF.

The protein belongs to the RIB43A family. In terms of assembly, microtubule inner protein component of sperm flagellar doublet microtubules.

It localises to the cytoplasm. The protein localises to the cytoskeleton. It is found in the flagellum axoneme. This Rattus norvegicus (Rat) protein is RIB43A-like with coiled-coils protein 1 (Ribc1).